The following is a 286-amino-acid chain: tRNA uridine(34) hydroxylase (286 aa).

The 96-residue stretch at 130–225 folds into the Rhodanese domain; the sequence is RGDDVVFFDG…YGETFGDRGL (96 aa). Cys-185 functions as the Cysteine persulfide intermediate in the catalytic mechanism.

This sequence belongs to the TrhO family.

It catalyses the reaction uridine(34) in tRNA + AH2 + O2 = 5-hydroxyuridine(34) in tRNA + A + H2O. Functionally, catalyzes oxygen-dependent 5-hydroxyuridine (ho5U) modification at position 34 in tRNAs. The chain is tRNA uridine(34) hydroxylase from Rhodococcus erythropolis (strain PR4 / NBRC 100887).